Consider the following 138-residue polypeptide: Basic phospholipase A2 BP-III (138 aa).

Positions 1–16 are cleaved as a signal peptide; it reads MRTLWIMAVLLVGVDG. Intrachain disulfides connect C42–C132, C44–C60, C59–C112, C65–C138, C66–C105, C73–C98, and C91–C103. The Ca(2+) site is built by G45 and G47. H63 is an active-site residue. Residue D106 is part of the active site.

The protein belongs to the phospholipase A2 family. Group II subfamily. K49 sub-subfamily. Requires Ca(2+) as cofactor. In terms of tissue distribution, expressed by the venom gland.

It is found in the secreted. It catalyses the reaction a 1,2-diacyl-sn-glycero-3-phosphocholine + H2O = a 1-acyl-sn-glycero-3-phosphocholine + a fatty acid + H(+). In terms of biological role, snake venom phospholipase A2 (PLA2) that has low phospholipase A2 activity. Shows anticoagulant activities, strong myolytic activity, infiltration of polymorphonuclear cells, and edema in stromal tissues. Induces cell death of Jurkat cells in a concentration dependent manner. PLA2 catalyzes the calcium-dependent hydrolysis of the 2-acyl groups in 3-sn-phosphoglycerides. The sequence is that of Basic phospholipase A2 BP-III from Protobothrops flavoviridis (Habu).